The primary structure comprises 533 residues: uncharacterized protein (533 aa).

Polar residues-rich tracts occupy residues 30 to 43 (SQQG…VKNH), 79 to 91 (NAGT…THLS), 231 to 247 (NVKS…SSSA), and 254 to 263 (GRQSNSPNSN). Disordered regions lie at residues 30–92 (SQQG…HLSA) and 221–274 (SLSP…PGAS). A Phosphoserine modification is found at S336. The disordered stretch occupies residues 475 to 510 (HPSLSNSAASPPVSSPGLRRSHIPVHEGLKHTRDGV). The segment covering 476–490 (PSLSNSAASPPVSSP) has biased composition (low complexity). Residues 498 to 510 (PVHEGLKHTRDGV) show a composition bias toward basic and acidic residues.

It is found in the nucleus. This is an uncharacterized protein from Schizosaccharomyces pombe (strain 972 / ATCC 24843) (Fission yeast).